The sequence spans 503 residues: Aspartyl/glutamyl-tRNA(Asn/Gln) amidotransferase subunit B (503 aa).

Belongs to the GatB/GatE family. GatB subfamily. Heterotrimer of A, B and C subunits.

It carries out the reaction L-glutamyl-tRNA(Gln) + L-glutamine + ATP + H2O = L-glutaminyl-tRNA(Gln) + L-glutamate + ADP + phosphate + H(+). The enzyme catalyses L-aspartyl-tRNA(Asn) + L-glutamine + ATP + H2O = L-asparaginyl-tRNA(Asn) + L-glutamate + ADP + phosphate + 2 H(+). In terms of biological role, allows the formation of correctly charged Asn-tRNA(Asn) or Gln-tRNA(Gln) through the transamidation of misacylated Asp-tRNA(Asn) or Glu-tRNA(Gln) in organisms which lack either or both of asparaginyl-tRNA or glutaminyl-tRNA synthetases. The reaction takes place in the presence of glutamine and ATP through an activated phospho-Asp-tRNA(Asn) or phospho-Glu-tRNA(Gln). The polypeptide is Aspartyl/glutamyl-tRNA(Asn/Gln) amidotransferase subunit B (Ruegeria pomeroyi (strain ATCC 700808 / DSM 15171 / DSS-3) (Silicibacter pomeroyi)).